A 208-amino-acid chain; its full sequence is Putative archaetidylserine decarboxylase proenzyme (208 aa).

The Schiff-base intermediate with substrate; via pyruvic acid role is filled by serine 171. A Pyruvic acid (Ser); by autocatalysis modification is found at serine 171.

It belongs to the phosphatidylserine decarboxylase family. PSD-A subfamily. As to quaternary structure, heterodimer of a large membrane-associated beta subunit and a small pyruvoyl-containing alpha subunit. The cofactor is pyruvate. Post-translationally, is synthesized initially as an inactive proenzyme. Formation of the active enzyme involves a self-maturation process in which the active site pyruvoyl group is generated from an internal serine residue via an autocatalytic post-translational modification. Two non-identical subunits are generated from the proenzyme in this reaction, and the pyruvate is formed at the N-terminus of the alpha chain, which is derived from the carboxyl end of the proenzyme. The post-translation cleavage follows an unusual pathway, termed non-hydrolytic serinolysis, in which the side chain hydroxyl group of the serine supplies its oxygen atom to form the C-terminus of the beta chain, while the remainder of the serine residue undergoes an oxidative deamination to produce ammonia and the pyruvoyl prosthetic group on the alpha chain.

Its subcellular location is the cell membrane. It carries out the reaction archaetidylserine + H(+) = archaetidylethanolamine + CO2. Its function is as follows. Catalyzes the formation of archaetidylethanolamine (PtdEtn) from archaetidylserine (PtdSer). This chain is Putative archaetidylserine decarboxylase proenzyme, found in Methanococcoides burtonii (strain DSM 6242 / NBRC 107633 / OCM 468 / ACE-M).